Here is a 138-residue protein sequence, read N- to C-terminus: Superoxide dismutase [Mn] (138 aa).

The Mn(2+) site is built by H2, H49, D133, and H137.

This sequence belongs to the iron/manganese superoxide dismutase family. The cofactor is Mn(2+).

It carries out the reaction 2 superoxide + 2 H(+) = H2O2 + O2. Its function is as follows. Destroys superoxide anion radicals which are normally produced within the cells and which are toxic to biological systems. In Mycolicibacterium phlei (Mycobacterium phlei), this protein is Superoxide dismutase [Mn] (sodA).